The chain runs to 314 residues: DNA-directed RNA polymerase subunit alpha (314 aa).

Positions 1-228 are alpha N-terminal domain (alpha-NTD); the sequence is MIEIEKPKIE…EHLNIFVGLT (228 aa). Residues 245-314 form an alpha C-terminal domain (alpha-CTD) region; that stretch reads KEKVLEMTIE…ELGLGLRKDD (70 aa).

Belongs to the RNA polymerase alpha chain family. As to quaternary structure, homodimer. The RNAP catalytic core consists of 2 alpha, 1 beta, 1 beta' and 1 omega subunit. When a sigma factor is associated with the core the holoenzyme is formed, which can initiate transcription.

The enzyme catalyses RNA(n) + a ribonucleoside 5'-triphosphate = RNA(n+1) + diphosphate. Its function is as follows. DNA-dependent RNA polymerase catalyzes the transcription of DNA into RNA using the four ribonucleoside triphosphates as substrates. The protein is DNA-directed RNA polymerase subunit alpha of Bacillus licheniformis (strain ATCC 14580 / DSM 13 / JCM 2505 / CCUG 7422 / NBRC 12200 / NCIMB 9375 / NCTC 10341 / NRRL NRS-1264 / Gibson 46).